Consider the following 128-residue polypeptide: Large ribosomal subunit protein bL17 (128 aa).

Belongs to the bacterial ribosomal protein bL17 family. As to quaternary structure, part of the 50S ribosomal subunit. Contacts protein L32.

The sequence is that of Large ribosomal subunit protein bL17 from Streptococcus sanguinis (strain SK36).